Consider the following 344-residue polypeptide: N-acetyl-gamma-glutamyl-phosphate reductase 1 (344 aa).

Residue C150 is part of the active site.

The protein belongs to the NAGSA dehydrogenase family. Type 1 subfamily.

The protein localises to the cytoplasm. It carries out the reaction N-acetyl-L-glutamate 5-semialdehyde + phosphate + NADP(+) = N-acetyl-L-glutamyl 5-phosphate + NADPH + H(+). The protein operates within amino-acid biosynthesis; L-arginine biosynthesis; N(2)-acetyl-L-ornithine from L-glutamate: step 3/4. Functionally, catalyzes the NADPH-dependent reduction of N-acetyl-5-glutamyl phosphate to yield N-acetyl-L-glutamate 5-semialdehyde. This chain is N-acetyl-gamma-glutamyl-phosphate reductase 1, found in Pseudomonas putida (strain ATCC 47054 / DSM 6125 / CFBP 8728 / NCIMB 11950 / KT2440).